Here is a 314-residue protein sequence, read N- to C-terminus: Vacuolar membrane protein VL3_4134 (314 aa).

The tract at residues lysine 32–alanine 60 is disordered. A helical transmembrane segment spans residues valine 93–leucine 113. Phosphoserine is present on residues serine 148, serine 254, and serine 274. Residues glutamate 240–asparagine 309 are disordered. Over residues serine 254 to histidine 269 the composition is skewed to basic and acidic residues.

It belongs to the PRM5 family.

It localises to the vacuole membrane. The protein is Vacuolar membrane protein VL3_4134 of Saccharomyces cerevisiae (strain Zymaflore VL3) (Baker's yeast).